A 438-amino-acid polypeptide reads, in one-letter code: Transcription termination factor Rho (438 aa).

The region spanning 70–145 is the Rho RNA-BD domain; that stretch reads YILFTGILEI…LKIEAINYLP (76 aa). Residues 188–193, 200–205, and R231 each bind ATP; these read GKGQRA and RTGKTE.

Belongs to the Rho family. Homohexamer. The homohexamer assembles into an open ring structure.

Its function is as follows. Facilitates transcription termination by a mechanism that involves Rho binding to the nascent RNA, activation of Rho's RNA-dependent ATPase activity, and release of the mRNA from the DNA template. This is Transcription termination factor Rho from Helicobacter pylori (strain J99 / ATCC 700824) (Campylobacter pylori J99).